Here is a 664-residue protein sequence, read N- to C-terminus: Probable 3',5'-cyclic phosphodiesterase pde-1 (664 aa).

2 disordered regions span residues 24-60 (TSSA…SIKI) and 113-142 (RNQK…KSYD). 2 stretches are compositionally biased toward basic and acidic residues: residues 28-38 (SEEHGDSDKKL) and 114-130 (NQKE…EKEP). Positions 256 to 634 (VQCPIPPEIA…AHWKERAAKE (379 aa)) constitute a PDEase domain. The active-site Proton donor is the His333. 4 residues coordinate a divalent metal cation: His337, His373, Asp374, and Asp480. Disordered regions lie at residues 564–597 (DSLF…TSPS) and 630–664 (RAAK…VTTN). Residues 630–644 (RAAKEEEERKIKEAA) are compositionally biased toward basic and acidic residues.

This sequence belongs to the cyclic nucleotide phosphodiesterase family. As to quaternary structure, interacts with cmd-1 in the presence of Ca(2+). The cofactor is a divalent metal cation. Expressed in AFD thermosensory neurons.

The catalysed reaction is a nucleoside 3',5'-cyclic phosphate + H2O = a nucleoside 5'-phosphate + H(+). Redundantly with pde-5, plays a role in the AFD thermosensory neurons to regulate microvilli receptive ending morphology, possibly by regulating cGMP levels. The chain is Probable 3',5'-cyclic phosphodiesterase pde-1 (pde-1) from Caenorhabditis elegans.